We begin with the raw amino-acid sequence, 221 residues long: Octanoyltransferase (221 aa).

Residues 35-221 (ESYENRIIFC…RELLAALLSK (187 aa)) enclose the BPL/LPL catalytic domain. Substrate-binding positions include 80 to 87 (RGGDITYH), 152 to 154 (AIG), and 165 to 167 (GLA). Catalysis depends on Cys183, which acts as the Acyl-thioester intermediate.

Belongs to the LipB family.

It is found in the cytoplasm. The enzyme catalyses octanoyl-[ACP] + L-lysyl-[protein] = N(6)-octanoyl-L-lysyl-[protein] + holo-[ACP] + H(+). It participates in protein modification; protein lipoylation via endogenous pathway; protein N(6)-(lipoyl)lysine from octanoyl-[acyl-carrier-protein]: step 1/2. In terms of biological role, catalyzes the transfer of endogenously produced octanoic acid from octanoyl-acyl-carrier-protein onto the lipoyl domains of lipoate-dependent enzymes. Lipoyl-ACP can also act as a substrate although octanoyl-ACP is likely to be the physiological substrate. This is Octanoyltransferase from Bacteroides fragilis (strain ATCC 25285 / DSM 2151 / CCUG 4856 / JCM 11019 / LMG 10263 / NCTC 9343 / Onslow / VPI 2553 / EN-2).